The chain runs to 135 residues: Translation initiation factor 2 subunit beta (135 aa).

The protein belongs to the eIF-2-beta/eIF-5 family. As to quaternary structure, heterotrimer composed of an alpha, a beta and a gamma chain.

EIF-2 functions in the early steps of protein synthesis by forming a ternary complex with GTP and initiator tRNA. In Methanothermobacter thermautotrophicus (strain ATCC 29096 / DSM 1053 / JCM 10044 / NBRC 100330 / Delta H) (Methanobacterium thermoautotrophicum), this protein is Translation initiation factor 2 subunit beta (eif2b).